The following is a 211-amino-acid chain: Uracil phosphoribosyltransferase (211 aa).

5-phospho-alpha-D-ribose 1-diphosphate-binding positions include Arg-78, Arg-103, and 130–138 (DPMLATGNS). Residues Ile-193 and 198–200 (GDA) contribute to the uracil site. Asp-199 serves as a coordination point for 5-phospho-alpha-D-ribose 1-diphosphate.

Belongs to the UPRTase family. Mg(2+) serves as cofactor.

The enzyme catalyses UMP + diphosphate = 5-phospho-alpha-D-ribose 1-diphosphate + uracil. The protein operates within pyrimidine metabolism; UMP biosynthesis via salvage pathway; UMP from uracil: step 1/1. Allosterically activated by GTP. Functionally, catalyzes the conversion of uracil and 5-phospho-alpha-D-ribose 1-diphosphate (PRPP) to UMP and diphosphate. This chain is Uracil phosphoribosyltransferase, found in Acinetobacter baumannii (strain AB307-0294).